A 697-amino-acid chain; its full sequence is MSQNERDSLELERKNTPPDGPRLPERRPRFSVWIYLAIFLALLVHFFLFWTGTDTSTIEYSQFLEYVEKGYVERVEIVNDTKVQGRFTEAAVREGLVSVPVRQTDLLRGAQTPELIRRFTTTKPADHDLTSFLLAYNERARAEGRPTVQFTARIEENWFGGLLTWIFPLILIVALWVFLLRRMSPSSQVLNIGKNRAILYDAMGDHRVTFKDVAGLDEAKEEVAEIVEFLKNPKKFTRLGGKLPKGVLLVGPPGTGKTLLAKAVAGEAGVPFFSISGSDFVEMFVGVGAARVRDLFRQAKEKAPCIIFIDEIDAIGRSRGRGIMMGANDERENTLNQLLVEMDGFNTDKGVIIMAATNRPDVLDPALLRPGRFDRQILIDKPDRRERLEIFKVHTRDLILGDDVDLEVLAGQTPGFAGAEIANVCNEAALLAARKGKEAVEMEDFEQAIDRVIAGLEKKNKIISPEEREIVAYHEAGHAIVGWFLRYTDPVVKVSIVPRGLAALGYAQYLPEERYLYTKEALLDRMTMAIGGRVAEELVFGRISTGAQNDLERITRMAYAMVVDYGMSERVGYVSFNLSGQYGEQAFFDKPYSEETARLIDEEVRRIINEVRERARRILEEKRDKLEALARRLLEKEVLGPRDLVEILGPRPYGDYPSPNGKDVEELKDLQKGEPTSSSAVEAPAPQTERPESSSAP.

A disordered region spans residues 1–23 (MSQNERDSLELERKNTPPDGPRL). Topologically, residues 1-29 (MSQNERDSLELERKNTPPDGPRLPERRPR) are cytoplasmic. The helical transmembrane segment at 30-50 (FSVWIYLAIFLALLVHFFLFW) threads the bilayer. Over 51–158 (TGTDTSTIEY…QFTARIEENW (108 aa)) the chain is Periplasmic. A helical transmembrane segment spans residues 159–179 (FGGLLTWIFPLILIVALWVFL). Over 180–697 (LRRMSPSSQV…TERPESSSAP (518 aa)) the chain is Cytoplasmic. Residue 251 to 258 (GPPGTGKT) coordinates ATP. Zn(2+) is bound at residue histidine 474. Residue glutamate 475 is part of the active site. 2 residues coordinate Zn(2+): histidine 478 and aspartate 550. The segment at 649–697 (GPRPYGDYPSPNGKDVEELKDLQKGEPTSSSAVEAPAPQTERPESSSAP) is disordered. The segment covering 662-672 (KDVEELKDLQK) has biased composition (basic and acidic residues).

The protein in the central section; belongs to the AAA ATPase family. This sequence in the C-terminal section; belongs to the peptidase M41 family. As to quaternary structure, homohexamer. It depends on Zn(2+) as a cofactor.

Its subcellular location is the cell inner membrane. In terms of biological role, acts as a processive, ATP-dependent zinc metallopeptidase for both cytoplasmic and membrane proteins. Plays a role in the quality control of integral membrane proteins. This is ATP-dependent zinc metalloprotease FtsH from Rhodothermus marinus (strain ATCC 43812 / DSM 4252 / R-10) (Rhodothermus obamensis).